The chain runs to 300 residues: Large ribosomal subunit protein uL18 (300 aa).

The segment covering 246-267 has biased composition (basic and acidic residues); sequence NIRSDPKRDRKPKKDVSKEPKR. The segment at 246–276 is disordered; that stretch reads NIRSDPKRDRKPKKDVSKEPKRWNAKKLTNA.

It belongs to the universal ribosomal protein uL18 family. In terms of assembly, component of the large ribosomal subunit (LSU).

The protein resides in the cytoplasm. Its subcellular location is the nucleus. Its function is as follows. Component of the ribosome, a large ribonucleoprotein complex responsible for the synthesis of proteins in the cell. The small ribosomal subunit (SSU) binds messenger RNAs (mRNAs) and translates the encoded message by selecting cognate aminoacyl-transfer RNA (tRNA) molecules. The large subunit (LSU) contains the ribosomal catalytic site termed the peptidyl transferase center (PTC), which catalyzes the formation of peptide bonds, thereby polymerizing the amino acids delivered by tRNAs into a polypeptide chain. The nascent polypeptides leave the ribosome through a tunnel in the LSU and interact with protein factors that function in enzymatic processing, targeting, and the membrane insertion of nascent chains at the exit of the ribosomal tunnel. In Toxoptera citricida (Brown citrus aphid), this protein is Large ribosomal subunit protein uL18 (RpL5).